The sequence spans 896 residues: MSDNRLDTARHHSLFLARQLDNGKLKPEIFLPMLDKVLTEADFQAFADWDKIRAEENEEELARQLRELRRYVVSQIIVRDINRISDLNEVTRTITLFADFAVNTALDFAYAYYRDMYGTPIGRYTKSPQHLSVVAMGKAGGYELNVSSDIDLIFVYPESGDTDGRRERGNQEFFTKVGQKLIALLNDITADGQVFRVDMRLRPDGDSGALVLSETALEQYLITQGREWERYAWCKGRVVTPYPNGIKSLVRPFVFRKYLDYSAYEAMRKLHRQISSEVSKKGMADNIKLGAGGIREVEFIAQIFQMIRGGQMRALQLKGTQETLKKLAETGIMPSENVETLLAAYRFLRDVEHRLQYWDDQQTQTLPTSPEQRQLLAESMGFDSYSAFSDGLNIHRNKVNQLFNEILSEPEEQTQDNSEWQWAWQEKPDEEERLGRLKEYGFDAETIATRLDQIRNGHKYRHLSAHAQPRFDAIVPLFVQAAAEQNNPTDTLMRLLDFLENISRRSAYLAFLNEHPQTLAQLAQIMGQSSWVAAYLNKYPILLDELISAQLLDTAFDWQALAAALSDDLKACGGDTEAQMDTLRRFQHAQVFRLAVQDLAGLWTVESLSDQLSALADTILAAALLCAWADMPKKHRDTPQFAIVGYGKLGGKELGYASDLDLVYLYDDPHPDAGDVYSRLARRLTNWLSTATGAGSLYETDLRLRPNGDAGFLAHSIAAFEKYQRENAWTWEHQSLTRARFICGTPEIQTAFDRIRTEILTAERDQTALSGEIIEMREKMFPTHPPADSNVKYARGGVVDVEFIVQYLILAHARQYPQLLDNYGNIALLNIAADCGLIDKTLAGQSRTAYRFYRRQQHNTKLRDAKKTEVTGELLAHYGNVRKLWREVFGEEAATA.

Residues 1–411 are adenylyl removase; sequence MSDNRLDTAR…LFNEILSEPE (411 aa). The adenylyl transferase stretch occupies residues 417 to 896; the sequence is NSEWQWAWQE…EVFGEEAATA (480 aa).

This sequence belongs to the GlnE family. Requires Mg(2+) as cofactor.

It carries out the reaction [glutamine synthetase]-O(4)-(5'-adenylyl)-L-tyrosine + phosphate = [glutamine synthetase]-L-tyrosine + ADP. The catalysed reaction is [glutamine synthetase]-L-tyrosine + ATP = [glutamine synthetase]-O(4)-(5'-adenylyl)-L-tyrosine + diphosphate. Involved in the regulation of glutamine synthetase GlnA, a key enzyme in the process to assimilate ammonia. When cellular nitrogen levels are high, the C-terminal adenylyl transferase (AT) inactivates GlnA by covalent transfer of an adenylyl group from ATP to specific tyrosine residue of GlnA, thus reducing its activity. Conversely, when nitrogen levels are low, the N-terminal adenylyl removase (AR) activates GlnA by removing the adenylyl group by phosphorolysis, increasing its activity. The regulatory region of GlnE binds the signal transduction protein PII (GlnB) which indicates the nitrogen status of the cell. The polypeptide is Bifunctional glutamine synthetase adenylyltransferase/adenylyl-removing enzyme (Neisseria meningitidis serogroup A / serotype 4A (strain DSM 15465 / Z2491)).